The primary structure comprises 162 residues: uncharacterized protein (162 aa).

This sequence belongs to the LOR family.

This is an uncharacterized protein from Bacillus subtilis (strain 168).